A 223-amino-acid polypeptide reads, in one-letter code: Urease accessory protein UreF (223 aa).

The protein belongs to the UreF family. UreD, UreF and UreG form a complex that acts as a GTP-hydrolysis-dependent molecular chaperone, activating the urease apoprotein by helping to assemble the nickel containing metallocenter of UreC. The UreE protein probably delivers the nickel.

The protein resides in the cytoplasm. Required for maturation of urease via the functional incorporation of the urease nickel metallocenter. The chain is Urease accessory protein UreF from Rhizobium leguminosarum bv. viciae.